The following is a 483-amino-acid chain: Cobyric acid synthase (483 aa).

Residues 251–438 (ALIVAVPMLP…LHGVFSADRF (188 aa)) form the GATase cobBQ-type domain. Residue Cys-333 is the Nucleophile of the active site. Residue His-430 is part of the active site.

Belongs to the CobB/CobQ family. CobQ subfamily.

Its pathway is cofactor biosynthesis; adenosylcobalamin biosynthesis. In terms of biological role, catalyzes amidations at positions B, D, E, and G on adenosylcobyrinic A,C-diamide. NH(2) groups are provided by glutamine, and one molecule of ATP is hydrogenolyzed for each amidation. The protein is Cobyric acid synthase of Brucella suis biovar 1 (strain 1330).